We begin with the raw amino-acid sequence, 330 residues long: Intraflagellar transport protein 46 homolog (330 aa).

Disordered stretches follow at residues 1 to 21 and 55 to 112; these read MDRPYDETVDIPDSEDIATPR and SIKT…EGVY. Over residues 7-16 the composition is skewed to acidic residues; sequence ETVDIPDSED. Over residues 68 to 79 the composition is skewed to basic and acidic residues; that stretch reads SSSEKLCDRGSS. Over residues 80 to 101 the composition is skewed to acidic residues; that stretch reads DDDDDDDNDDDEDEDDDDDDEN.

This sequence belongs to the IFT46 family.

It localises to the cytoplasm. The protein localises to the cytoskeleton. It is found in the cilium basal body. The protein resides in the cell projection. Its subcellular location is the cilium. Functionally, forms part of a complex involved in intraflagellar transport (IFT), the bi-directional movement of particles required for the assembly, maintenance and functioning of primary cilia. The chain is Intraflagellar transport protein 46 homolog from Schistosoma japonicum (Blood fluke).